We begin with the raw amino-acid sequence, 375 residues long: Alpha-1,2-galactosyltransferase (375 aa).

The Cytoplasmic portion of the chain corresponds to 1–2 (MR). A helical; Signal-anchor for type II membrane protein transmembrane segment spans residues 3–23 (FAPYLISAVVITTIILGGAWW). Over 24–375 (TSAMDTKLQT…HIQNLLKPSS (352 aa)) the chain is Lumenal.

Belongs to the glycosyltransferase 34 family. Post-translationally, O-glycosylated.

The protein resides in the golgi apparatus membrane. Functionally, involved in the O- and N-linked oligosaccharide modification of proteins transported through the Golgi stack. This occurs in cis Golgi where the enzyme transfers galactose from UDP-galactose to a variety of mannose based acceptors. The protein is Alpha-1,2-galactosyltransferase (gma12) of Schizosaccharomyces pombe (strain 972 / ATCC 24843) (Fission yeast).